Reading from the N-terminus, the 144-residue chain is Protein cornichon (144 aa).

Topologically, residues 1–10 (MAFNFTAFTY) are lumenal. Residues 1–57 (MAFNFTAFTYIVALIGDAFLIFFAIFHVIAFDELKTDYKNPIDQCNSLNPLVLPEYL) are interaction with grk. Residues 11–31 (IVALIGDAFLIFFAIFHVIAF) traverse the membrane as a helical segment. Residues 32 to 56 (DELKTDYKNPIDQCNSLNPLVLPEY) are Cytoplasmic-facing. Residues 57–77 (LLHIFLNLLFLFCGEWFSLCI) form a helical membrane-spanning segment. At 78–122 (NIPLIAYHIWRYKNRPVMSGPGLYDPTTVLKTDTLYRNMREGWIK) the chain is on the lumenal side. Residues 123 to 143 (LAVYLISFFYYIYGMVYSLIS) form a helical membrane-spanning segment. A topological domain (cytoplasmic) is located at residue Thr144.

The protein belongs to the cornichon family. In terms of assembly, interacts with grk. In terms of tissue distribution, expressed in male and female somatic tissues.

The protein resides in the endoplasmic reticulum membrane. Functionally, acts as a cargo receptor necessary for the transportation of gurken (grk) to a transitional endoplasmic reticulum (tER) site and promotes its incorporation into coat protein complex II (COPII) vesicles. Associated with gurken, produces a signal received by torpedo resulting in a signaling pathway that first establishes posterior follicle cell fates and normal localization of the anterior and posterior determinants, later they act in a signaling event inducing dorsal follicle cell fates and regulating the dorsal-ventral pattern of egg and embryo. This Drosophila melanogaster (Fruit fly) protein is Protein cornichon (cni).